A 620-amino-acid chain; its full sequence is Translocator protein BipB (620 aa).

The disordered stretch occupies residues 58 to 95 (QCDAQPAAHDARLDDKPALRAPQERDAPPLGASDTGSR). Basic and acidic residues predominate over residues 66–84 (HDARLDDKPALRAPQERDA). A coiled-coil region spans residues 309–339 (EMQAKREAELQKKSDEYQAQVKKAEEMQKTM). 3 helical membrane-spanning segments follow: residues 355-375 (FAAA…GLAL), 401-421 (AILK…LVAC), and 430-450 (LAGA…AAFV).

This sequence belongs to the SctE/SipB/YopB family.

The protein resides in the secreted. It is found in the host membrane. In terms of biological role, plays a role in the bacterium-induced formation of multinucleated giant cell (MNGC), which is formed after host cell fusion, as well as in the intercellular spreading of bacteria and in the induction of apoptosis in macrophages. May act in concert with other effector proteins to induce fusion of host cell membranes. The chain is Translocator protein BipB (bipB) from Burkholderia pseudomallei (strain 1106a).